Consider the following 276-residue polypeptide: 2-dehydro-3-deoxyphosphooctonate aldolase (276 aa).

It belongs to the KdsA family.

The protein localises to the cytoplasm. The enzyme catalyses D-arabinose 5-phosphate + phosphoenolpyruvate + H2O = 3-deoxy-alpha-D-manno-2-octulosonate-8-phosphate + phosphate. Its pathway is carbohydrate biosynthesis; 3-deoxy-D-manno-octulosonate biosynthesis; 3-deoxy-D-manno-octulosonate from D-ribulose 5-phosphate: step 2/3. It participates in bacterial outer membrane biogenesis; lipopolysaccharide biosynthesis. This is 2-dehydro-3-deoxyphosphooctonate aldolase from Chelativorans sp. (strain BNC1).